We begin with the raw amino-acid sequence, 542 residues long: CTP synthase (542 aa).

Positions 1–265 are amidoligase domain; that stretch reads MARYVFITGG…DDEVLAAFGI (265 aa). A CTP-binding site is contributed by S13. Residue S13 participates in UTP binding. ATP contacts are provided by residues 14–19 and D71; that span reads SLGKGI. The Mg(2+) site is built by D71 and E139. Residues 146-148, 186-191, and K222 each bind CTP; these read DIE and KTKPTQ. Residues 186–191 and K222 each bind UTP; that span reads KTKPTQ. In terms of domain architecture, Glutamine amidotransferase type-1 spans 291–541; that stretch reads TIAIVGKYTG…IEAATEQSRL (251 aa). Position 353 (G353) interacts with L-glutamine. C380 serves as the catalytic Nucleophile; for glutamine hydrolysis. L-glutamine-binding positions include 381 to 384, E404, and R469; that span reads FGMQ. Residues H514 and E516 contribute to the active site.

The protein belongs to the CTP synthase family. As to quaternary structure, homotetramer.

The enzyme catalyses UTP + L-glutamine + ATP + H2O = CTP + L-glutamate + ADP + phosphate + 2 H(+). The catalysed reaction is L-glutamine + H2O = L-glutamate + NH4(+). It carries out the reaction UTP + NH4(+) + ATP = CTP + ADP + phosphate + 2 H(+). It participates in pyrimidine metabolism; CTP biosynthesis via de novo pathway; CTP from UDP: step 2/2. With respect to regulation, allosterically activated by GTP, when glutamine is the substrate; GTP has no effect on the reaction when ammonia is the substrate. The allosteric effector GTP functions by stabilizing the protein conformation that binds the tetrahedral intermediate(s) formed during glutamine hydrolysis. Inhibited by the product CTP, via allosteric rather than competitive inhibition. Functionally, catalyzes the ATP-dependent amination of UTP to CTP with either L-glutamine or ammonia as the source of nitrogen. Regulates intracellular CTP levels through interactions with the four ribonucleotide triphosphates. The sequence is that of CTP synthase from Rhizobium etli (strain CIAT 652).